A 356-amino-acid chain; its full sequence is D-amino-acid oxidase (356 aa).

A signal peptide spans 1-17; it reads MAKIVVIGAGVAGLTTA. Residues Ala-9, Ser-44, Gly-48, and Asn-50 each coordinate FAD. Phe-54 lines the anthranilate pocket. Val-171 contributes to the FAD binding site. N-linked (GlcNAc...) asparagine glycosylation occurs at Asn-192. Residue Tyr-243 coordinates anthranilate. Tyr-243 contacts (R)-lactate. Asn-262 carries N-linked (GlcNAc...) asparagine glycosylation. FAD-binding residues include Arg-302, Ala-329, Gly-332, Tyr-333, and Gln-334. Arg-302 lines the anthranilate pocket. (R)-lactate is bound at residue Arg-302.

It belongs to the DAMOX/DASOX family. It depends on FAD as a cofactor.

Its subcellular location is the peroxisome matrix. It catalyses the reaction a D-alpha-amino acid + O2 + H2O = a 2-oxocarboxylate + H2O2 + NH4(+). The catalysed reaction is D-alanine + O2 + H2O = pyruvate + H2O2 + NH4(+). The enzyme catalyses D-serine + O2 + H2O = 3-hydroxypyruvate + H2O2 + NH4(+). It carries out the reaction D-phenylalanine + O2 + H2O = 3-phenylpyruvate + H2O2 + NH4(+). It catalyses the reaction D-lysine + O2 + H2O = 6-amino-2-oxohexanoate + H2O2 + NH4(+). The catalysed reaction is D-tyrosine + O2 + H2O = 3-(4-hydroxyphenyl)pyruvate + H2O2 + NH4(+). The enzyme catalyses D-methionine + O2 + H2O = 4-methylsulfanyl-2-oxobutanoate + H2O2 + NH4(+). It carries out the reaction D-tryptophan + O2 + H2O = indole-3-pyruvate + H2O2 + NH4(+). It catalyses the reaction D-leucine + O2 + H2O = 4-methyl-2-oxopentanoate + H2O2 + NH4(+). The catalysed reaction is D-valine + O2 + H2O = 3-methyl-2-oxobutanoate + H2O2 + NH4(+). With respect to regulation, inhibited by benzoate and hypochlorite. In terms of biological role, catalyzes the oxidative deamination of D-amino acids with broad substrate specificity. Enables the organism to utilize D-amino acids as a source of nutrients. This Trigonopsis variabilis (Yeast) protein is D-amino-acid oxidase.